The following is a 249-amino-acid chain: 2-dehydro-3-deoxy-L-rhamnonate dehydrogenase (NAD(+)) (249 aa).

Catalysis depends on Y156, which acts as the Proton acceptor.

It belongs to the short-chain dehydrogenases/reductases (SDR) family. As to quaternary structure, homotetramer.

It catalyses the reaction 2-dehydro-3-deoxy-L-rhamnonate + NAD(+) = 2,4-didehydro-3-deoxy-L-rhamnonate + NADH + H(+). It participates in carbohydrate degradation; L-rhamnose degradation. Its function is as follows. Catalyzes the NAD(+)-dependent dehydrogenation of 2-dehydro-3-deoxy-L-rhamnonate to form 2,4-didehydro-3-deoxy-L-rhamnonate. Does not show any detectable activity in the presence of NADP(+). Catalyzes the fourth step in an alternative pathway for rhamnose utilization that does not involve phosphorylated intermediates. The protein is 2-dehydro-3-deoxy-L-rhamnonate dehydrogenase (NAD(+)) of Sphingomonas sp. (strain SKA58).